The following is a 320-amino-acid chain: ATP-dependent 6-phosphofructokinase (320 aa).

An ATP-binding site is contributed by G11. 21-25 (RAVVR) serves as a coordination point for ADP. Residues 72 to 73 (RY) and 102 to 105 (GDGS) each bind ATP. Mg(2+) is bound at residue D103. 125–127 (TID) provides a ligand contact to substrate. Residue D127 is the Proton acceptor of the active site. R154 contacts ADP. Residues R162 and 169–171 (MGR) contribute to the substrate site. ADP contacts are provided by residues 185 to 187 (GAD), R211, and 213 to 215 (KKH). Residues E222, R243, and 249–252 (HVVR) each bind substrate.

The protein belongs to the phosphofructokinase type A (PFKA) family. ATP-dependent PFK group I subfamily. Prokaryotic clade 'B1' sub-subfamily. In terms of assembly, homotetramer. Mg(2+) is required as a cofactor.

The protein resides in the cytoplasm. It carries out the reaction beta-D-fructose 6-phosphate + ATP = beta-D-fructose 1,6-bisphosphate + ADP + H(+). It participates in carbohydrate degradation; glycolysis; D-glyceraldehyde 3-phosphate and glycerone phosphate from D-glucose: step 3/4. With respect to regulation, allosterically activated by ADP and other diphosphonucleosides, and allosterically inhibited by phosphoenolpyruvate. Its function is as follows. Catalyzes the phosphorylation of D-fructose 6-phosphate to fructose 1,6-bisphosphate by ATP, the first committing step of glycolysis. The polypeptide is ATP-dependent 6-phosphofructokinase (Enterococcus faecalis (strain ATCC 700802 / V583)).